The following is a 539-amino-acid chain: Chaperonin GroEL (539 aa).

ATP-binding positions include Thr29 to Pro32, Asp86 to Thr90, Gly413, Asn477 to Ala479, and Asp493.

Belongs to the chaperonin (HSP60) family. Forms a cylinder of 14 subunits composed of two heptameric rings stacked back-to-back. Interacts with the co-chaperonin GroES.

Its subcellular location is the cytoplasm. The catalysed reaction is ATP + H2O + a folded polypeptide = ADP + phosphate + an unfolded polypeptide.. Together with its co-chaperonin GroES, plays an essential role in assisting protein folding. The GroEL-GroES system forms a nano-cage that allows encapsulation of the non-native substrate proteins and provides a physical environment optimized to promote and accelerate protein folding. The sequence is that of Chaperonin GroEL from Clavibacter michiganensis subsp. michiganensis (strain NCPPB 382).